The sequence spans 160 residues: Large ribosomal subunit protein uL16 (160 aa).

Belongs to the universal ribosomal protein uL16 family. As to quaternary structure, part of the 50S ribosomal subunit.

Binds 23S rRNA and is also seen to make contacts with the A and possibly P site tRNAs. The chain is Large ribosomal subunit protein uL16 from Prochlorococcus marinus (strain MIT 9515).